The sequence spans 263 residues: MWEFRSFSFWRAVFAEFFGTMFYVFFGLGASLKWAAGPANVLVIALAFGLVLATMVQSIGHVSGAHINPAVTFAFLIGSQMSLFRAIFYIAAQLLGAVAGAAVLYGVTPAAIRGNLALNTLHPGVSLGQATTVEIFLTLQFVLCIFATYDERRNGRLGSVSLAIGFSLTLGHLFGLYYTGASMNPARSFAPAVLTRNFTNHWVYWVGPIIGGALGGLVYDFILFPRMRGLSERLSILKGARPAEPEGQQEATGEPIELKTQSL.

The Cytoplasmic segment spans residues 1-9; it reads MWEFRSFSF. The chain crosses the membrane as a helical span at residues 10–29; sequence WRAVFAEFFGTMFYVFFGLG. Residues 30-41 lie on the Extracellular side of the membrane; it reads ASLKWAAGPANV. The helical transmembrane segment at 42-59 threads the bilayer; sequence LVIALAFGLVLATMVQSI. Residues 60-61 lie on the Cytoplasmic side of the membrane; it reads GH. Residues 62 to 77 constitute an intramembrane region (discontinuously helical); sequence VSGAHINPAVTFAFLI. The NPA 1 signature appears at 68-70; it reads NPA. Over 78–82 the chain is Cytoplasmic; that stretch reads GSQMS. The helical transmembrane segment at 83-106 threads the bilayer; the sequence is LFRAIFYIAAQLLGAVAGAAVLYG. Over 107-127 the chain is Extracellular; that stretch reads VTPAAIRGNLALNTLHPGVSL. Residues 128-148 traverse the membrane as a helical segment; it reads GQATTVEIFLTLQFVLCIFAT. The Cytoplasmic segment spans residues 149-156; sequence YDERRNGR. Residues 157-175 traverse the membrane as a helical segment; the sequence is LGSVSLAIGFSLTLGHLFG. Over 176-178 the chain is Extracellular; sequence LYY. Residues 179–193 constitute an intramembrane region (discontinuously helical); that stretch reads TGASMNPARSFAPAV. The NPA 2 motif lies at 184–186; that stretch reads NPA. Topologically, residues 194-200 are extracellular; the sequence is LTRNFTN. Residues 201-222 traverse the membrane as a helical segment; it reads HWVYWVGPIIGGALGGLVYDFI. The Cytoplasmic portion of the chain corresponds to 223–263; the sequence is LFPRMRGLSERLSILKGARPAEPEGQQEATGEPIELKTQSL. The tract at residues 227–237 is interaction with CALM; it reads MRGLSERLSIL. The interval 241 to 263 is disordered; that stretch reads RPAEPEGQQEATGEPIELKTQSL.

This sequence belongs to the MIP/aquaporin (TC 1.A.8) family. In terms of assembly, homotetramer; each monomer provides an independent water pore. Two homotetramers on opposing membranes can dimerize, forming a cell-cell junction. Interacts with CALM; the calcium-calmodulin/CALM complex interacts with the cytoplasmic domains of two aquaporins, leading to channel closure.

It is found in the cell membrane. Its subcellular location is the cell junction. The catalysed reaction is H2O(in) = H2O(out). With respect to regulation, the water channel activity is inhibited by calcium through calmodulin/CALM. Functionally, aquaporins form homotetrameric transmembrane channels, with each monomer independently mediating water transport across the plasma membrane along its osmotic gradient. Specifically expressed in lens fiber cells, this aquaporin is crucial for maintaining lens water homeostasis and transparency. Beyond water permeability, it also acts as a cell-to-cell adhesion molecule, forming thin junctions between lens fiber cells that are essential for maintaining the ordered structure and transparency of the lens. The sequence is that of Lens fiber major intrinsic protein from Lithobates pipiens (Northern leopard frog).